The chain runs to 102 residues: Putative peripheral benzodiazepine receptor-related protein (102 aa).

As to expression, ubiquitous.

This Homo sapiens (Human) protein is Putative peripheral benzodiazepine receptor-related protein (TSPO).